Here is a 525-residue protein sequence, read N- to C-terminus: Chromosomal replication initiator protein DnaA (525 aa).

The interval 1–71 (MNDFWQHCSA…ADLAREFWNT (71 aa)) is domain I, interacts with DnaA modulators. Residues 71 to 188 (TPIEVQFVLD…AEADSMYERS (118 aa)) are domain II. The segment at 160 to 181 (AAAGRRTWRPGPGAAPANGAEA) is disordered. Residues 169–181 (PGPGAAPANGAEA) show a composition bias toward low complexity. A domain III, AAA+ region region spans residues 189 to 405 (KLNPVLTFDN…GALRKILAYS (217 aa)). G233, G235, K236, and T237 together coordinate ATP. The domain IV, binds dsDNA stretch occupies residues 406 to 525 (KFHGREISIE…LHVLEQTLKG (120 aa)).

This sequence belongs to the DnaA family. As to quaternary structure, oligomerizes as a right-handed, spiral filament on DNA at oriC.

The protein resides in the cytoplasm. Functionally, plays an essential role in the initiation and regulation of chromosomal replication. ATP-DnaA binds to the origin of replication (oriC) to initiate formation of the DNA replication initiation complex once per cell cycle. Binds the DnaA box (a 9 base pair repeat at the origin) and separates the double-stranded (ds)DNA. Forms a right-handed helical filament on oriC DNA; dsDNA binds to the exterior of the filament while single-stranded (ss)DNA is stabiized in the filament's interior. The ATP-DnaA-oriC complex binds and stabilizes one strand of the AT-rich DNA unwinding element (DUE), permitting loading of DNA polymerase. After initiation quickly degrades to an ADP-DnaA complex that is not apt for DNA replication. Binds acidic phospholipids. In Burkholderia vietnamiensis (strain G4 / LMG 22486) (Burkholderia cepacia (strain R1808)), this protein is Chromosomal replication initiator protein DnaA.